A 2210-amino-acid chain; its full sequence is Genome polyprotein (2210 aa).

The disordered stretch occupies residues 1–24 (MAPVVSRDQCKPKTPKPHRPAPPH). The span at 13 to 22 (KTPKPHRPAP) shows a compositional bias: basic residues. In terms of domain architecture, SF3 helicase spans 426 to 585 (SNKIVELSTM…ADFLRQHPGV (160 aa)). 456–463 (GPPGHGKS) contacts ATP. Tyr940 carries the post-translational modification O-(5'-phospho-RNA)-tyrosine. Residues 991–1136 (GNNCDDIPLH…KVITPITPEP (146 aa)) enclose the Peptidase C24 domain. Residues His1025, Asp1039, and Cys1103 each act as for 3CLpro activity in the active site. Residues 1379–1501 (DHCLELDYSK…TIPSHLTKSI (123 aa)) form the RdRp catalytic domain. The tract at residues 1656 to 1685 (LIREGNMSDNKSIPEQQHESSRAMDAGATG) is disordered.

Specific enzymatic cleavages by its own cysteine protease yield mature proteins. The protease cleaves itself from the nascent polyprotein autocatalytically. Precursor p41 can be cleaved by viral 3CLpro into protein p19 and VPg, or cleaved by host protease into protein p23/2 and protein p18. In terms of processing, VPg is uridylylated by the polymerase and is covalently attached to the 5'-end of the polyadenylated genomic and subgenomic RNAs. This uridylylated form acts as a nucleotide-peptide primer for the polymerase.

Its subcellular location is the virion. It is found in the host cytoplasm. It catalyses the reaction a ribonucleoside 5'-triphosphate + H2O = a ribonucleoside 5'-diphosphate + phosphate + H(+). The catalysed reaction is Endopeptidase with a preference for cleavage when the P1 position is occupied by Glu-|-Xaa and the P1' position is occupied by Gly-|-Yaa.. The enzyme catalyses RNA(n) + a ribonucleoside 5'-triphosphate = RNA(n+1) + diphosphate. Functionally, displays NTPase activity, but no helicase activity. Induces the formation of convoluted membranes derived from the host ER. These remodeled membranes probably form the viral factories that contain the replication complex. Together with NS2 and NS4, initiates the formation of the replication complex. Its function is as follows. Viral genome-linked protein is covalently linked to the 5'-end of the positive-strand, negative-strand genomic RNAs and subgenomic RNA. Acts as a genome-linked replication primer. May recruit ribosome to viral RNA thereby promoting viral proteins translation. Interacts with host translation initiation complex to allow the translation of viral proteins. Processes the polyprotein. 3CLpro-RdRp is first released by autocleavage, then all other proteins are cleaved. May cleave polyadenylate-binding protein thereby inhibiting cellular translation. In terms of biological role, replicates genomic and antigenomic RNA by recognizing replications specific signals. Also transcribes a subgenomic mRNA by initiating RNA synthesis internally on antigenomic RNA. This sgRNA codes for structural proteins. Catalyzes the covalent attachment VPg with viral RNAs. Functionally, capsid protein self assembles to form an icosahedral capsid with a T=3 symmetry, about 35 nm in diameter, and consisting of 180 capsid proteins. A smaller form of capsid with a diameter of 23 nm might be capsid proteins assembled as icosahedron with T=1 symmetry. The capsid encapsulate VP2 proteins and genomic or subgenomic RNA. Attaches virion to target cells by binding histo-blood group antigens, inducing endocytosis of the viral particle. Acidification of the endosome induces conformational change of capsid protein thereby injecting virus genomic RNA into host cytoplasm. The protein is Genome polyprotein of Bovine enteric calicivirus NB (isolate Bovine/United States/N ebraska/1980) (BEC-NB).